The sequence spans 497 residues: Kynureninase (497 aa).

A disordered region spans residues 59–86 (GRLPAYPPNHAKPGETATAQNGTSNTND). Polar residues predominate over residues 75 to 86 (ATAQNGTSNTND). Pyridoxal 5'-phosphate is bound by residues leucine 166, threonine 167, 194–197 (FPSD), aspartate 278, histidine 281, and tyrosine 303. An N6-(pyridoxal phosphate)lysine modification is found at lysine 304. Positions 337 and 365 each coordinate pyridoxal 5'-phosphate.

It belongs to the kynureninase family. Homodimer. Pyridoxal 5'-phosphate serves as cofactor.

The protein localises to the cytoplasm. It catalyses the reaction L-kynurenine + H2O = anthranilate + L-alanine + H(+). The enzyme catalyses 3-hydroxy-L-kynurenine + H2O = 3-hydroxyanthranilate + L-alanine + H(+). It participates in amino-acid degradation; L-kynurenine degradation; L-alanine and anthranilate from L-kynurenine: step 1/1. The protein operates within cofactor biosynthesis; NAD(+) biosynthesis; quinolinate from L-kynurenine: step 2/3. In terms of biological role, catalyzes the cleavage of L-kynurenine (L-Kyn) and L-3-hydroxykynurenine (L-3OHKyn) into anthranilic acid (AA) and 3-hydroxyanthranilic acid (3-OHAA), respectively. This is Kynureninase from Pyricularia oryzae (strain 70-15 / ATCC MYA-4617 / FGSC 8958) (Rice blast fungus).